Here is a 208-residue protein sequence, read N- to C-terminus: Translation initiation factor 2 subunit beta (208 aa).

The 59-residue stretch at 144-202 folds into the TRAM domain; sequence GIEEGKEYTVEISEVGSSGEGRASFRGFTIFVPGTKKGETVKVKIKKIKNDVAIAEVVS.

This sequence belongs to the eIF-2-beta/eIF-5 family. Heterotrimer composed of an alpha, a beta and a gamma chain.

EIF-2 functions in the early steps of protein synthesis by forming a ternary complex with GTP and initiator tRNA. This is Translation initiation factor 2 subunit beta (eif2b) from Thermoplasma volcanium (strain ATCC 51530 / DSM 4299 / JCM 9571 / NBRC 15438 / GSS1).